The chain runs to 131 residues: Sec-independent protein translocase protein TatB (131 aa).

Residues 2–22 (FDGIGFMELLLIGILGLVVLG) form a helical membrane-spanning segment. Polar residues-rich tracts occupy residues 68-83 (ESQGLKNLSPELQDSI) and 116-131 (AEKSTTTGANSDKPNG). The segment at 68–131 (ESQGLKNLSP…TGANSDKPNG (64 aa)) is disordered.

Belongs to the TatB family. In terms of assembly, the Tat system comprises two distinct complexes: a TatABC complex, containing multiple copies of TatA, TatB and TatC subunits, and a separate TatA complex, containing only TatA subunits. Substrates initially bind to the TatABC complex, which probably triggers association of the separate TatA complex to form the active translocon.

It is found in the cell inner membrane. Functionally, part of the twin-arginine translocation (Tat) system that transports large folded proteins containing a characteristic twin-arginine motif in their signal peptide across membranes. Together with TatC, TatB is part of a receptor directly interacting with Tat signal peptides. TatB may form an oligomeric binding site that transiently accommodates folded Tat precursor proteins before their translocation. The sequence is that of Sec-independent protein translocase protein TatB from Shewanella pealeana (strain ATCC 700345 / ANG-SQ1).